Reading from the N-terminus, the 1418-residue chain is JmjC domain-containing histone demethylation protein 1 (1418 aa).

Disordered regions lie at residues 1–86, 102–162, and 308–329; these read MIGA…SSST, APLS…STFD, and GADR…SDEN. A compositionally biased stretch (basic and acidic residues) spans 44 to 60; the sequence is WIDRGDSQAASYDRDRV. The span at 61 to 71 shows a compositional bias: polar residues; it reads TSNNDVYSSTN. Positions 127–139 are enriched in basic and acidic residues; it reads STERPAKRPRSEK. Positions 143-162 are enriched in polar residues; sequence PLHQPQTTVAPDANPSSTFD. The segment covering 308–321 has biased composition (basic and acidic residues); it reads GADRASLDVPPRGD. A PHD-type zinc finger spans residues 331–391; sequence QANCAACNLV…KFICRRCRPI (61 aa). In terms of domain architecture, JmjC spans 588 to 746; the sequence is VSQSKLGKLI…MQIKVAKIEK (159 aa). Substrate is bound at residue threonine 639. The Fe cation site is built by histidine 642 and aspartate 644. Lysine 659 contacts substrate. Histidine 714 is a binding site for Fe cation. Disordered regions lie at residues 891-964, 1090-1118, 1130-1195, and 1250-1394; these read PQWT…TVEI, NAAT…CDDC, YGRI…HTQR, and KPTA…DEPD. Over residues 907 to 925 the composition is skewed to basic and acidic residues; the sequence is LTEKKPAGRPSRRSERNAE. Composition is skewed to basic and acidic residues over residues 1130 to 1143 and 1186 to 1195; these read YGRI…ERSK and AEGDMSHTQR. Positions 1250 to 1263 are enriched in polar residues; that stretch reads KPTASLVSPPTSQA. A compositionally biased stretch (low complexity) spans 1341 to 1352; that stretch reads SSKKPASRPSSS.

The protein belongs to the JHDM1 histone demethylase family. The cofactor is Fe(2+).

It is found in the nucleus. It carries out the reaction N(6),N(6)-dimethyl-L-lysyl(36)-[histone H3] + 2 2-oxoglutarate + 2 O2 = L-lysyl(36)-[histone H3] + 2 formaldehyde + 2 succinate + 2 CO2. Functionally, histone demethylase that specifically demethylates 'Lys-36' of histone H3, thereby playing a central role in histone code. The chain is JmjC domain-containing histone demethylation protein 1 (jhd1) from Aspergillus fumigatus (strain ATCC MYA-4609 / CBS 101355 / FGSC A1100 / Af293) (Neosartorya fumigata).